A 176-amino-acid chain; its full sequence is Peptide deformylase (176 aa).

Fe cation contacts are provided by C97 and H139. Residue E140 is part of the active site. H143 provides a ligand contact to Fe cation.

It belongs to the polypeptide deformylase family. It depends on Fe(2+) as a cofactor.

It carries out the reaction N-terminal N-formyl-L-methionyl-[peptide] + H2O = N-terminal L-methionyl-[peptide] + formate. Removes the formyl group from the N-terminal Met of newly synthesized proteins. Requires at least a dipeptide for an efficient rate of reaction. N-terminal L-methionine is a prerequisite for activity but the enzyme has broad specificity at other positions. In Thermomicrobium roseum (strain ATCC 27502 / DSM 5159 / P-2), this protein is Peptide deformylase.